The following is a 459-amino-acid chain: tRNA modification GTPase MnmE (459 aa).

3 residues coordinate (6S)-5-formyl-5,6,7,8-tetrahydrofolate: arginine 22, glutamate 85, and arginine 124. The TrmE-type G domain maps to 221 to 380 (GLSTVIVGKP…LELQIRDLFF (160 aa)). Asparagine 231 lines the K(+) pocket. Residues 231 to 236 (NVGKSS), 250 to 256 (TEVAGTT), and 275 to 278 (DTAG) each bind GTP. Position 235 (serine 235) interacts with Mg(2+). Positions 250, 252, and 255 each coordinate K(+). Threonine 256 contributes to the Mg(2+) binding site. A (6S)-5-formyl-5,6,7,8-tetrahydrofolate-binding site is contributed by lysine 459.

The protein belongs to the TRAFAC class TrmE-Era-EngA-EngB-Septin-like GTPase superfamily. TrmE GTPase family. In terms of assembly, homodimer. Heterotetramer of two MnmE and two MnmG subunits. Requires K(+) as cofactor.

Its subcellular location is the cytoplasm. In terms of biological role, exhibits a very high intrinsic GTPase hydrolysis rate. Involved in the addition of a carboxymethylaminomethyl (cmnm) group at the wobble position (U34) of certain tRNAs, forming tRNA-cmnm(5)s(2)U34. This Staphylococcus haemolyticus (strain JCSC1435) protein is tRNA modification GTPase MnmE.